A 175-amino-acid polypeptide reads, in one-letter code: Large ribosomal subunit protein bL17 (175 aa).

The tract at residues 127-175 is disordered; it reads GEAEAATKRAVKEDALKKDEAPAAESVEDAKPAEDAPAAEAADDKGKDA. The span at 131 to 147 shows a compositional bias: basic and acidic residues; sequence AATKRAVKEDALKKDEA.

It belongs to the bacterial ribosomal protein bL17 family. As to quaternary structure, part of the 50S ribosomal subunit. Contacts protein L32.

This Streptomyces griseus subsp. griseus (strain JCM 4626 / CBS 651.72 / NBRC 13350 / KCC S-0626 / ISP 5235) protein is Large ribosomal subunit protein bL17.